We begin with the raw amino-acid sequence, 502 residues long: ATP synthase subunit alpha (502 aa).

Positions 115–138 are disordered; the sequence is VDGLGPIETTETRPIESPAPGVMD. 169 to 176 is an ATP binding site; the sequence is GDRQTGKT.

Belongs to the ATPase alpha/beta chains family. F-type ATPases have 2 components, CF(1) - the catalytic core - and CF(0) - the membrane proton channel. CF(1) has five subunits: alpha(3), beta(3), gamma(1), delta(1), epsilon(1). CF(0) has three main subunits: a(1), b(2) and c(9-12). The alpha and beta chains form an alternating ring which encloses part of the gamma chain. CF(1) is attached to CF(0) by a central stalk formed by the gamma and epsilon chains, while a peripheral stalk is formed by the delta and b chains.

It localises to the cell membrane. The catalysed reaction is ATP + H2O + 4 H(+)(in) = ADP + phosphate + 5 H(+)(out). Produces ATP from ADP in the presence of a proton gradient across the membrane. The alpha chain is a regulatory subunit. This is ATP synthase subunit alpha from Geobacillus sp. (strain WCH70).